Here is a 202-residue protein sequence, read N- to C-terminus: Zinc metalloproteinase barnettlysin-1 (202 aa).

In terms of domain architecture, Peptidase M12B spans 6–200 (RYVELFIVVD…MKENPQCILN (195 aa)). The Ca(2+) site is built by Glu9 and Asp93. 3 disulfide bridges follow: Cys117–Cys197, Cys157–Cys181, and Cys159–Cys164. His142 contacts Zn(2+). Glu143 is an active-site residue. Residues His146 and His152 each coordinate Zn(2+). Residues Cys197 and Asn200 each coordinate Ca(2+).

Monomer. Zn(2+) is required as a cofactor. In terms of tissue distribution, expressed by the venom gland.

It localises to the secreted. Its function is as follows. Non-hemorrhagic metalloproteinase that hydrolyzes the alpha chains of fibrinogen and fibrin but has no activity on beta- and gamma-chains. Cleaves X-Leu bonds. Inhibits platelet aggregation induced by the von Willebrand factor (VWF) (IC(50) is 1.4 uM) and type I collagen (IC(50) is 3.2 uM). Acts by cleaving the vWF and its receptor GPIb, and by cleaving the collagen-binding Alpha-2A domain of the collagen receptor alpha-2/beta-1 integrin (ITGA2/ITGB1). Also degrades the extracellular matrix protein fibronectin (FN1), but has no effect on laminin and type I collagen. This chain is Zinc metalloproteinase barnettlysin-1, found in Bothrops barnetti (Barnett's lancehead).